The chain runs to 131 residues: Small ribosomal subunit protein uS9 (131 aa).

This sequence belongs to the universal ribosomal protein uS9 family.

The chain is Small ribosomal subunit protein uS9 from Actinobacillus succinogenes (strain ATCC 55618 / DSM 22257 / CCUG 43843 / 130Z).